The chain runs to 1342 residues: Receptor tyrosine-protein kinase erbB-3 (1342 aa).

The first 19 residues, 1 to 19 (MRANDALQVLGLLFSLARG), serve as a signal peptide directing secretion. Topologically, residues 20 to 643 (SEVGNSQAVC…LVLIGKTHLT (624 aa)) are extracellular. Cys-29 and Cys-56 are oxidised to a cystine. N-linked (GlcNAc...) asparagine glycosylation occurs at Asn-126. Disulfide bonds link Cys-156-Cys-183, Cys-186-Cys-194, Cys-190-Cys-202, Cys-210-Cys-218, Cys-214-Cys-226, Cys-227-Cys-235, Cys-231-Cys-243, Cys-246-Cys-255, Cys-259-Cys-286, Cys-290-Cys-301, Cys-305-Cys-320, and Cys-323-Cys-327. Asn-250 is a glycosylation site (N-linked (GlcNAc...) asparagine). 5 N-linked (GlcNAc...) asparagine glycosylation sites follow: Asn-353, Asn-408, Asn-414, Asn-437, and Asn-469. Intrachain disulfides connect Cys-500/Cys-509, Cys-504/Cys-517, Cys-520/Cys-529, Cys-533/Cys-549, Cys-552/Cys-565, Cys-556/Cys-573, Cys-576/Cys-585, Cys-589/Cys-610, Cys-613/Cys-621, and Cys-617/Cys-629. The N-linked (GlcNAc...) asparagine glycan is linked to Asn-522. A glycan (N-linked (GlcNAc...) asparagine) is linked at Asn-566. Residue Asn-616 is glycosylated (N-linked (GlcNAc...) asparagine). A helical transmembrane segment spans residues 644–664 (MALTVIAGLVVIFMMLGGTFL). Residues 665–1342 (YWRGRRIQNK…LFPKANAQRT (678 aa)) lie on the Cytoplasmic side of the membrane. A Phosphoserine modification is found at Ser-686. The 258-residue stretch at 709–966 (LRKLKVLGSG…TFKELANEFT (258 aa)) folds into the Protein kinase domain. ATP-binding positions include 715–723 (LGSGVFGTV), Lys-742, 788–790 (QYL), and 834–839 (NLAARN). The active-site Proton acceptor is the Asn-834. 2 disordered regions span residues 980–999 (RESGPGIAPGPEPHGLTNKK) and 1033–1152 (LPVG…PGLE). Ser-982 carries the post-translational modification Phosphoserine. Polar residues predominate over residues 1042–1075 (RGSQSLLSPSSGYMPMNQGNLGESCQESAVSGSS).

Belongs to the protein kinase superfamily. Tyr protein kinase family. EGF receptor subfamily. Monomer and homodimer. Heterodimer with each of the other ERBB receptors (Potential). Interacts with CSPG5. Interacts with GRB7. Interacts with MUC1. Interacts with MYOC. Interacts with isoform 2 of PA2G4. Found in a ternary complex with NRG1 and ITGAV:ITGB3 or ITGA6:ITGB4. Autophosphorylated. Ligand-binding increases phosphorylation on tyrosine residues and promotes its association with the p85 subunit of phosphatidylinositol 3-kinase. In terms of tissue distribution, epithelial tissues and brain.

Its subcellular location is the cell membrane. The protein localises to the secreted. It catalyses the reaction L-tyrosyl-[protein] + ATP = O-phospho-L-tyrosyl-[protein] + ADP + H(+). In terms of biological role, tyrosine-protein kinase that plays an essential role as cell surface receptor for neuregulins. Binds to neuregulin-1 (NRG1) and is activated by it; ligand-binding increases phosphorylation on tyrosine residues and promotes its association with the p85 subunit of phosphatidylinositol 3-kinase. May also be activated by CSPG5. Involved in the regulation of myeloid cell differentiation. This is Receptor tyrosine-protein kinase erbB-3 (ERBB3) from Homo sapiens (Human).